A 199-amino-acid polypeptide reads, in one-letter code: Imidazoleglycerol-phosphate dehydratase (199 aa).

Belongs to the imidazoleglycerol-phosphate dehydratase family.

The protein resides in the cytoplasm. The catalysed reaction is D-erythro-1-(imidazol-4-yl)glycerol 3-phosphate = 3-(imidazol-4-yl)-2-oxopropyl phosphate + H2O. The protein operates within amino-acid biosynthesis; L-histidine biosynthesis; L-histidine from 5-phospho-alpha-D-ribose 1-diphosphate: step 6/9. The protein is Imidazoleglycerol-phosphate dehydratase of Roseiflexus sp. (strain RS-1).